We begin with the raw amino-acid sequence, 230 residues long: uncharacterized protein (230 aa).

This is an uncharacterized protein from Acanthamoeba polyphaga (Amoeba).